A 532-amino-acid chain; its full sequence is 2,3-bisphosphoglycerate-independent phosphoglycerate mutase (532 aa).

Residues D13 and S63 each contribute to the Mn(2+) site. The Phosphoserine intermediate role is filled by S63. Substrate contacts are provided by residues H124, 154–155 (RD), R187, R193, 262–265 (RPDR), and K343. Mn(2+)-binding residues include D421, H425, D463, H464, and H481.

This sequence belongs to the BPG-independent phosphoglycerate mutase family. Monomer. Requires Mn(2+) as cofactor.

The enzyme catalyses (2R)-2-phosphoglycerate = (2R)-3-phosphoglycerate. Its pathway is carbohydrate degradation; glycolysis; pyruvate from D-glyceraldehyde 3-phosphate: step 3/5. Catalyzes the interconversion of 2-phosphoglycerate and 3-phosphoglycerate. This is 2,3-bisphosphoglycerate-independent phosphoglycerate mutase from Mesoplasma florum (strain ATCC 33453 / NBRC 100688 / NCTC 11704 / L1) (Acholeplasma florum).